A 396-amino-acid chain; its full sequence is Ribosomal RNA large subunit methyltransferase I (396 aa).

In terms of domain architecture, PUA spans 2–79 (AVRIKLKPGR…REEEIDREFF (78 aa)).

It belongs to the methyltransferase superfamily. RlmI family.

The protein localises to the cytoplasm. It catalyses the reaction cytidine(1962) in 23S rRNA + S-adenosyl-L-methionine = 5-methylcytidine(1962) in 23S rRNA + S-adenosyl-L-homocysteine + H(+). Its function is as follows. Specifically methylates the cytosine at position 1962 (m5C1962) of 23S rRNA. The protein is Ribosomal RNA large subunit methyltransferase I of Shewanella sp. (strain ANA-3).